Here is a 289-residue protein sequence, read N- to C-terminus: Acetyl-coenzyme A carboxylase carboxyl transferase subunit beta (289 aa).

The 256-residue stretch at 34 to 289 folds into the CoA carboxyltransferase N-terminal domain; that stretch reads MWVKCNKCGE…KLINMHQNSF (256 aa). C38, C41, C57, and C60 together coordinate Zn(2+). The segment at 38 to 60 adopts a C4-type zinc-finger fold; sequence CNKCGEILYQNDLEKNYMVCNLC.

It belongs to the AccD/PCCB family. As to quaternary structure, acetyl-CoA carboxylase is a heterohexamer composed of biotin carboxyl carrier protein (AccB), biotin carboxylase (AccC) and two subunits each of ACCase subunit alpha (AccA) and ACCase subunit beta (AccD). The cofactor is Zn(2+).

It is found in the cytoplasm. The catalysed reaction is N(6)-carboxybiotinyl-L-lysyl-[protein] + acetyl-CoA = N(6)-biotinyl-L-lysyl-[protein] + malonyl-CoA. Its pathway is lipid metabolism; malonyl-CoA biosynthesis; malonyl-CoA from acetyl-CoA: step 1/1. Functionally, component of the acetyl coenzyme A carboxylase (ACC) complex. Biotin carboxylase (BC) catalyzes the carboxylation of biotin on its carrier protein (BCCP) and then the CO(2) group is transferred by the transcarboxylase to acetyl-CoA to form malonyl-CoA. The protein is Acetyl-coenzyme A carboxylase carboxyl transferase subunit beta of Clostridium botulinum (strain Okra / Type B1).